The sequence spans 173 residues: Globin, cuticular isoform (173 aa).

A signal peptide spans 1–16 (MLWFVAVCFAIASVSA). Residues 17-166 (MSPADVKKHT…FNSEAQHQLE (150 aa)) enclose the Globin domain. Histidine 113 is a heme b binding site.

It belongs to the globin family. Expressed only by adult nematodes in the gut.

Its subcellular location is the secreted. It localises to the extracellular space. In Nippostrongylus brasiliensis (Rat hookworm), this protein is Globin, cuticular isoform (GLBC).